Reading from the N-terminus, the 456-residue chain is Methionine aminopeptidase 2 (456 aa).

Positions Met-1–Pro-11 are enriched in pro residues. Residues Met-1–Arg-127 form a disordered region. Residues Glu-31–Glu-45 are compositionally biased toward acidic residues. Positions Lys-66 to Lys-79 are enriched in basic residues. His-209 contributes to the substrate binding site. Asp-229, Asp-240, and His-309 together coordinate a divalent metal cation. His-317 contributes to the substrate binding site. 2 residues coordinate a divalent metal cation: Glu-343 and Glu-437.

The protein belongs to the peptidase M24A family. Methionine aminopeptidase eukaryotic type 2 subfamily. Requires Co(2+) as cofactor. Zn(2+) serves as cofactor. Mn(2+) is required as a cofactor. The cofactor is Fe(2+).

Its subcellular location is the cytoplasm. The catalysed reaction is Release of N-terminal amino acids, preferentially methionine, from peptides and arylamides.. Functionally, cotranslationally removes the N-terminal methionine from nascent proteins. The N-terminal methionine is often cleaved when the second residue in the primary sequence is small and uncharged (Met-Ala-, Cys, Gly, Pro, Ser, Thr, or Val). The chain is Methionine aminopeptidase 2 from Puccinia graminis f. sp. tritici (strain CRL 75-36-700-3 / race SCCL) (Black stem rust fungus).